The chain runs to 405 residues: Tyrosine--tRNA ligase (405 aa).

The short motif at 48-57 (PSRPDLHLGH) is the 'HIGH' region element. The 'KMSKS' region signature appears at 232 to 236 (KMSKS). Residue Lys235 coordinates ATP. The region spanning 339–400 (LPLVDLLTTL…AGKRKFFRIA (62 aa)) is the S4 RNA-binding domain.

This sequence belongs to the class-I aminoacyl-tRNA synthetase family. TyrS type 2 subfamily. In terms of assembly, homodimer.

The protein localises to the cytoplasm. The catalysed reaction is tRNA(Tyr) + L-tyrosine + ATP = L-tyrosyl-tRNA(Tyr) + AMP + diphosphate + H(+). Catalyzes the attachment of tyrosine to tRNA(Tyr) in a two-step reaction: tyrosine is first activated by ATP to form Tyr-AMP and then transferred to the acceptor end of tRNA(Tyr). The chain is Tyrosine--tRNA ligase from Chlorobium luteolum (strain DSM 273 / BCRC 81028 / 2530) (Pelodictyon luteolum).